Reading from the N-terminus, the 384-residue chain is S-adenosylmethionine synthase (384 aa).

An ATP-binding site is contributed by histidine 15. Aspartate 17 contributes to the Mg(2+) binding site. A K(+)-binding site is contributed by glutamate 43. Glutamate 56 and glutamine 99 together coordinate L-methionine. The tract at residues 99 to 109 is flexible loop; it reads QSPDINQGVDR. Residues 164–166, 230–231, aspartate 239, 245–246, alanine 262, and lysine 266 contribute to the ATP site; these read DAK, RF, and RK. An L-methionine-binding site is contributed by aspartate 239. An L-methionine-binding site is contributed by lysine 270.

The protein belongs to the AdoMet synthase family. In terms of assembly, homotetramer; dimer of dimers. It depends on Mg(2+) as a cofactor. Requires K(+) as cofactor.

Its subcellular location is the cytoplasm. It catalyses the reaction L-methionine + ATP + H2O = S-adenosyl-L-methionine + phosphate + diphosphate. Its pathway is amino-acid biosynthesis; S-adenosyl-L-methionine biosynthesis; S-adenosyl-L-methionine from L-methionine: step 1/1. Its function is as follows. Catalyzes the formation of S-adenosylmethionine (AdoMet) from methionine and ATP. The overall synthetic reaction is composed of two sequential steps, AdoMet formation and the subsequent tripolyphosphate hydrolysis which occurs prior to release of AdoMet from the enzyme. The protein is S-adenosylmethionine synthase of Photobacterium profundum (strain SS9).